The chain runs to 428 residues: Adenylosuccinate synthetase (428 aa).

Residues 12-18 (GDEGKGK) and 40-42 (GHT) each bind GTP. Aspartate 13 serves as the catalytic Proton acceptor. Mg(2+) is bound by residues aspartate 13 and glycine 40. IMP contacts are provided by residues 13-16 (DEGK), 38-41 (NAGH), threonine 127, arginine 141, glutamine 222, threonine 237, and arginine 301. Histidine 41 acts as the Proton donor in catalysis. 297 to 303 (TVTKRPR) serves as a coordination point for substrate. GTP-binding positions include arginine 303, 329 to 331 (CLD), and 411 to 413 (SVG).

Belongs to the adenylosuccinate synthetase family. As to quaternary structure, homodimer. Mg(2+) serves as cofactor.

The protein localises to the cytoplasm. It catalyses the reaction IMP + L-aspartate + GTP = N(6)-(1,2-dicarboxyethyl)-AMP + GDP + phosphate + 2 H(+). It participates in purine metabolism; AMP biosynthesis via de novo pathway; AMP from IMP: step 1/2. In terms of biological role, plays an important role in the de novo pathway of purine nucleotide biosynthesis. Catalyzes the first committed step in the biosynthesis of AMP from IMP. In Levilactobacillus brevis (strain ATCC 367 / BCRC 12310 / CIP 105137 / JCM 1170 / LMG 11437 / NCIMB 947 / NCTC 947) (Lactobacillus brevis), this protein is Adenylosuccinate synthetase.